A 96-amino-acid polypeptide reads, in one-letter code: Putative toxin Y4kP (96 aa).

It belongs to the RelE toxin family.

Toxic component of a type II toxin-antitoxin (TA) system. This is Putative toxin Y4kP from Sinorhizobium fredii (strain NBRC 101917 / NGR234).